A 332-amino-acid chain; its full sequence is DNA-directed RNA polymerase subunit alpha (332 aa).

Residues 1-226 (MLIAQRPTLT…ELFGLCRELN (226 aa)) are alpha N-terminal domain (alpha-NTD). An alpha C-terminal domain (alpha-CTD) region spans residues 245–332 (PEMNIPIEDL…GGTFFSPEDE (88 aa)).

This sequence belongs to the RNA polymerase alpha chain family. Homodimer. The RNAP catalytic core consists of 2 alpha, 1 beta, 1 beta' and 1 omega subunit. When a sigma factor is associated with the core the holoenzyme is formed, which can initiate transcription.

The catalysed reaction is RNA(n) + a ribonucleoside 5'-triphosphate = RNA(n+1) + diphosphate. Functionally, DNA-dependent RNA polymerase catalyzes the transcription of DNA into RNA using the four ribonucleoside triphosphates as substrates. This is DNA-directed RNA polymerase subunit alpha from Bifidobacterium adolescentis (strain ATCC 15703 / DSM 20083 / NCTC 11814 / E194a).